The following is a 462-amino-acid chain: MHKRTYLNACLVLALAAGASQALAAPGASEMAGDVAVLQASPASTGHARFANPNAAISAAGIHFAAPPARRVARAAPLAPKPGTPLQVGVGLKTATPEIDLTTLEWIDTPDGRHTARFPISAAGAASLRAAIRLETHSGSLPDDVLLHFAGAGKEIFEASGKDLSVNRPYWSPVIEGDTLTVELVLPANLQPGDLRLSVPQVSYFADSLYKAGYRDGFGASGSCEVDAVCATQSGTRAYDNATAAVAKMVFTSSADGGSYICTGTLLNNGNSPKRQLFWSAAHCIEDQATAATLQTIWFYNTTQCYGDASTINQSVTVLTGGANILHRDAKRDTLLLELKRTPPAGVFYQGWSATPIANGSLGHDIHHPRGDAKKYSQGNVSAVGVTYDGHTALTRVDWPSAVVEGGSSGSGLLTVAGDGSYQLRGGLYGGPSYCGAPTSQRNDYFSDFSGVYSQISRYFAP.

The N-terminal stretch at 1–24 (MHKRTYLNACLVLALAAGASQALA) is a signal peptide. A propeptide spanning residues 25–211 (APGASEMAGD…VSYFADSLYK (187 aa)) is cleaved from the precursor. Intrachain disulfides connect C224–C435, C230–C305, and C262–C284. Residues H283, D333, and S409 each act as charge relay system in the active site.

It belongs to the peptidase S1 family. In terms of processing, experiments performed in E.coli. Processing of pro-endopeptidase to mature endopeptidase is probably autocatalytic, as mutations in the probable active site residues prevent processing, and purified inactive pro-endopeptidase disappears in the presence of active endopeptidase.

Its subcellular location is the secreted. It carries out the reaction Preferential cleavage: Lys-|-Xaa, including Lys-|-Pro.. Functionally, lysine-specific endoprotease. Involved in corneal virulence. This Pseudomonas aeruginosa (strain ATCC 15692 / DSM 22644 / CIP 104116 / JCM 14847 / LMG 12228 / 1C / PRS 101 / PAO1) protein is Lysyl endopeptidase (prpL).